The primary structure comprises 182 residues: PRA1 family protein D (182 aa).

Ala2 bears the N-acetylalanine mark. 3 helical membrane-spanning segments follow: residues 68–88 (LITRPIAILAFIAVGLAWFFL), 107–127 (IVAVLLIGLSIGSLVTTGVWL), and 129–149 (ALTTVGFGVLVLILHAALRGT). Positions 163-182 (PMLSTSGGGNDGARGDYSGI) are disordered.

The protein belongs to the PRA1 family. Interacts with PRA1F2 and PRA1F3. Interacts with the cauliflower mosaic virus (CaMV) movement protein (via N-terminus). In terms of tissue distribution, expressed in hypocotyls, roots, lateral roots, lateral root caps, columella cells, leaves, shoot apex, stems and flowers.

The protein localises to the endosome membrane. May be involved in both secretory and endocytic intracellular trafficking in the endosomal/prevacuolar compartments. This chain is PRA1 family protein D (PRA1D), found in Arabidopsis thaliana (Mouse-ear cress).